The sequence spans 137 residues: Large ribosomal subunit protein uL16 (137 aa).

A compositionally biased stretch (basic residues) spans 1–16 (MLQPKRTKFRKMQKGR). Residues 1-22 (MLQPKRTKFRKMQKGRIRGEAK) are disordered.

Belongs to the universal ribosomal protein uL16 family. Part of the 50S ribosomal subunit.

Functionally, binds 23S rRNA and is also seen to make contacts with the A and possibly P site tRNAs. In Jannaschia sp. (strain CCS1), this protein is Large ribosomal subunit protein uL16.